The chain runs to 430 residues: Agropine synthesis reductase (430 aa).

203–227 (LVSGSNRGVGKAIAEDLIAHGYRLS) serves as a coordination point for NAD(+). Position 333 (Ser333) interacts with substrate. The active-site Proton acceptor is the Tyr346.

It belongs to the short-chain dehydrogenases/reductases (SDR) family.

Its pathway is opine metabolism; mannopine biosynthesis. Functionally, reduces deoxy-fructosyl-glutamine to mannopine. This chain is Agropine synthesis reductase (mas1), found in Rhizobium rhizogenes (Agrobacterium rhizogenes).